A 270-amino-acid chain; its full sequence is Pre-mRNA-splicing factor CWC23 (270 aa).

The 73-residue stretch at 12-84 folds into the J domain; that stretch reads DLYRILHIHV…EHKKEYDIWY (73 aa).

Belongs to the DnaJ family. As to quaternary structure, associated with the spliceosome.

The protein localises to the cytoplasm. Its subcellular location is the nucleus. Its function is as follows. Involved in pre-mRNA splicing. May be involved in endoplasmic reticulum-associated protein degradation (ERAD) and required for growth at low and high temperatures. This Kluyveromyces lactis (strain ATCC 8585 / CBS 2359 / DSM 70799 / NBRC 1267 / NRRL Y-1140 / WM37) (Yeast) protein is Pre-mRNA-splicing factor CWC23 (CWC23).